The following is an 852-amino-acid chain: Gamma-tubulin complex component 2 homolog (852 aa).

Phosphoserine is present on Ser-73.

The protein belongs to the TUBGCP family. Gamma-tubulin small complex (Gamma TuSC) is a heterotetrameric complex which contains two molecules of gamma-tubulin, and one molecule each of Dgrip84 and Dgrip91. The gamma-tubulin in this complex binds preferentially to GDP over GTP.

It is found in the cytoplasm. The protein resides in the cytoskeleton. The protein localises to the microtubule organizing center. Its subcellular location is the centrosome. It localises to the perinuclear region. This chain is Gamma-tubulin complex component 2 homolog (Grip84), found in Drosophila melanogaster (Fruit fly).